The chain runs to 130 residues: Fluoride-specific ion channel FluC (130 aa).

A run of 4 helical transmembrane segments spans residues 4–24 (MINV…RYFI), 35–55 (GFPI…GLLT), 68–88 (LNLF…TFSL), and 99–119 (AVFG…GVVL). Na(+)-binding residues include glycine 78 and threonine 81.

This sequence belongs to the fluoride channel Fluc/FEX (TC 1.A.43) family.

The protein resides in the cell membrane. It carries out the reaction fluoride(in) = fluoride(out). Na(+) is not transported, but it plays an essential structural role and its presence is essential for fluoride channel function. Functionally, fluoride-specific ion channel. Important for reducing fluoride concentration in the cell, thus reducing its toxicity. In Ruminiclostridium cellulolyticum (strain ATCC 35319 / DSM 5812 / JCM 6584 / H10) (Clostridium cellulolyticum), this protein is Fluoride-specific ion channel FluC.